Consider the following 266-residue polypeptide: Large ribosomal subunit protein eL8 (266 aa).

Positions 1-11 (MPKGKKAKGKK) are enriched in basic residues. Disordered regions lie at residues 1 to 28 (MPKG…KKVV) and 105 to 134 (ETKQ…KRPP). The span at 116–130 (ARAEQKAAGKGDAPT) shows a compositional bias: basic and acidic residues.

It belongs to the eukaryotic ribosomal protein eL8 family. In terms of assembly, component of the large ribosomal subunit.

It localises to the cytoplasm. Its function is as follows. Component of the large ribosomal subunit. The ribosome is a large ribonucleoprotein complex responsible for the synthesis of proteins in the cell. The sequence is that of Large ribosomal subunit protein eL8 (rpl7a) from Takifugu rubripes (Japanese pufferfish).